Consider the following 243-residue polypeptide: 2,3-bisphosphoglycerate-dependent phosphoglycerate mutase (243 aa).

Residues 8-15 (RHGQSEWN), 21-22 (TG), Arg60, 87-90 (ERHY), Lys98, 114-115 (RR), and 183-184 (GN) contribute to the substrate site. The Tele-phosphohistidine intermediate role is filled by His9. The Proton donor/acceptor role is filled by Glu87.

Belongs to the phosphoglycerate mutase family. BPG-dependent PGAM subfamily.

It carries out the reaction (2R)-2-phosphoglycerate = (2R)-3-phosphoglycerate. Its pathway is carbohydrate degradation; glycolysis; pyruvate from D-glyceraldehyde 3-phosphate: step 3/5. In terms of biological role, catalyzes the interconversion of 2-phosphoglycerate and 3-phosphoglycerate. This chain is 2,3-bisphosphoglycerate-dependent phosphoglycerate mutase, found in Clostridium acetobutylicum (strain ATCC 824 / DSM 792 / JCM 1419 / IAM 19013 / LMG 5710 / NBRC 13948 / NRRL B-527 / VKM B-1787 / 2291 / W).